Here is a 383-residue protein sequence, read N- to C-terminus: Probable aspartate/prephenate aminotransferase (383 aa).

The L-aspartate site is built by Gly-39, Trp-125, and Asn-175. Residue Lys-234 is modified to N6-(pyridoxal phosphate)lysine. Arg-361 provides a ligand contact to L-aspartate.

This sequence belongs to the class-I pyridoxal-phosphate-dependent aminotransferase family. Homodimer. Requires pyridoxal 5'-phosphate as cofactor.

It localises to the cytoplasm. It catalyses the reaction L-aspartate + 2-oxoglutarate = oxaloacetate + L-glutamate. The catalysed reaction is L-arogenate + oxaloacetate = prephenate + L-aspartate. Catalyzes the reversible conversion of aspartate and 2-oxoglutarate to glutamate and oxaloacetate. Can also transaminate prephenate in the presence of aspartate. The polypeptide is Probable aspartate/prephenate aminotransferase (aspC) (Thermus aquaticus).